Reading from the N-terminus, the 147-residue chain is Hemoglobin subunit beta-2 (147 aa).

In terms of domain architecture, Globin spans 3–147; sequence EWTDSERAII…VVSALGRQYH (145 aa). Heme b contacts are provided by histidine 64 and histidine 93.

It belongs to the globin family. As to quaternary structure, hb 3 is a heterotetramer of two alpha-2 and two beta-2 chains. In terms of tissue distribution, red blood cells.

Involved in oxygen transport from gills to the various peripheral tissues. This Boreogadus saida (Polar cod) protein is Hemoglobin subunit beta-2 (hbb2).